Reading from the N-terminus, the 785-residue chain is Ubiquitin carboxyl-terminal hydrolase 1 (785 aa).

Disordered regions lie at residues 1–21 and 33–52; these read MPGV…SKKN and TKRA…ASEY. The span at 7-16 shows a compositional bias: polar residues; sequence SESNGLSRGS. A phosphoserine mark is found at S16, S42, and S67. Positions 81–785 constitute a USP domain; the sequence is VGLNNLGNTC…TPYLLFYKKL (705 aa). Residue C90 is the Nucleophile of the active site. Basic and acidic residues-rich tracts occupy residues 258 to 275 and 286 to 298; these read EDFK…KSDT and LSKE…ENQR. The interval 258–336 is disordered; sequence EDFKEKLPKG…SPRPSQKKSR (79 aa). Phosphoserine is present on residues S313 and S475. The active-site Proton acceptor is H593. Positions 693 to 723 are disordered; that stretch reads TAFAENRNSETSDTTGTHESDRNKESSDQTG. Over residues 708–719 the composition is skewed to basic and acidic residues; that stretch reads GTHESDRNKESS. S768 is subject to Phosphoserine.

It belongs to the peptidase C19 family. Interacts with FANCD2 and PCNA. Interacts with WDR48. Interacts with ATAD5; the interaction regulates USP1-mediated PCNA deubiquitination. In terms of processing, autocatalytic cleavage of USP1 following UV irradiation inactivates it, leading to an increase in ubiquitinated PCNA, recruitment of POLH and translesion synthesis. Post-translationally, ubiquitinated by the CRL2(KLHDC2) complex following autocatalytic cleavage, leading to its degradation: the CRL2(KLHDC2) complex recognizes the diglycine (Gly-Gly) at the C-terminus.

It is found in the nucleus. The enzyme catalyses Thiol-dependent hydrolysis of ester, thioester, amide, peptide and isopeptide bonds formed by the C-terminal Gly of ubiquitin (a 76-residue protein attached to proteins as an intracellular targeting signal).. In terms of biological role, negative regulator of DNA damage repair which specifically deubiquitinates monoubiquitinated FANCD2. Also involved in PCNA-mediated translesion synthesis (TLS) by deubiquitinating monoubiquitinated PCNA. Has almost no deubiquitinating activity by itself and requires the interaction with WDR48 to have a high activity. This Homo sapiens (Human) protein is Ubiquitin carboxyl-terminal hydrolase 1 (USP1).